Reading from the N-terminus, the 103-residue chain is Turripeptide OL55-like (103 aa).

In terms of processing, contains 8 disulfide bonds. Expressed by the venom duct.

The protein localises to the secreted. In terms of biological role, acts as a neurotoxin by inhibiting an ion channel. The polypeptide is Turripeptide OL55-like (Lophiotoma albina (Sea snail)).